Reading from the N-terminus, the 63-residue chain is Probable rubredoxin (63 aa).

The 52-residue stretch at 11 to 62 (MKRYKCRVCGYIYDPEKGEPRTDTPPGTPFEDLPETWRCPSCGAKKKMFKPL) folds into the Rubredoxin-like domain. 4 residues coordinate Fe cation: Cys16, Cys19, Cys49, and Cys52.

The protein belongs to the rubredoxin family. Requires Fe(3+) as cofactor.

In terms of biological role, rubredoxin is a small nonheme, iron protein lacking acid-labile sulfide. Its single Fe, chelated to 4 Cys, functions as an electron acceptor and may also stabilize the conformation of the molecule. The chain is Probable rubredoxin from Methanothermobacter thermautotrophicus (strain ATCC 29096 / DSM 1053 / JCM 10044 / NBRC 100330 / Delta H) (Methanobacterium thermoautotrophicum).